Reading from the N-terminus, the 48-residue chain is Large ribosomal subunit protein bL34c (48 aa).

The interval 18–48 (SGFRSRMATPQGRKTIRNRRKKGRKNLTLRR) is disordered. The segment covering 31–48 (KTIRNRRKKGRKNLTLRR) has biased composition (basic residues).

Belongs to the bacterial ribosomal protein bL34 family.

Its subcellular location is the plastid. The protein resides in the chloroplast. The chain is Large ribosomal subunit protein bL34c from Phaeodactylum tricornutum (strain CCAP 1055/1).